The primary structure comprises 396 residues: Putative amidohydrolase YhaA (396 aa).

The active site involves D85. E143 acts as the Proton acceptor in catalysis. Residues E144, R182, and H368 each contribute to the Zn(2+) site.

This sequence belongs to the peptidase M20A family. Zn(2+) is required as a cofactor. Co(2+) serves as cofactor.

This Bacillus subtilis (strain 168) protein is Putative amidohydrolase YhaA (yhaA).